The following is a 303-amino-acid chain: Sulfotransferase 6B1 (303 aa).

65 to 70 is a 3'-phosphoadenylyl sulfate binding site; the sequence is KCGSNW. H118 functions as the Proton acceptor in the catalytic mechanism. Residues R140, S148, Y203, 237-242, and 259-261 contribute to the 3'-phosphoadenylyl sulfate site; these read STFQAM and RKG.

This sequence belongs to the sulfotransferase 1 family. As to expression, specifically expressed in kidney and testis.

The protein localises to the cytoplasm. It localises to the cytosol. It catalyses the reaction thyroxine + 3'-phosphoadenylyl sulfate = thyroxine sulfate + adenosine 3',5'-bisphosphate + H(+). Its function is as follows. Sulfotransferase that utilizes 3'-phospho-5'-adenylyl sulfate (PAPS) as sulfonate donor to catalyze the sulfate conjugation of thyroxine. Involved in the metabolism of thyroxine. The polypeptide is Sulfotransferase 6B1 (SULT6B1) (Homo sapiens (Human)).